The following is a 236-amino-acid chain: Biosynthetic peptidoglycan transglycosylase (236 aa).

A helical membrane pass occupies residues 12–31 (ALLWFVAGSIVLVLVFRWVP).

The protein belongs to the glycosyltransferase 51 family.

The protein resides in the cell inner membrane. The enzyme catalyses [GlcNAc-(1-&gt;4)-Mur2Ac(oyl-L-Ala-gamma-D-Glu-L-Lys-D-Ala-D-Ala)](n)-di-trans,octa-cis-undecaprenyl diphosphate + beta-D-GlcNAc-(1-&gt;4)-Mur2Ac(oyl-L-Ala-gamma-D-Glu-L-Lys-D-Ala-D-Ala)-di-trans,octa-cis-undecaprenyl diphosphate = [GlcNAc-(1-&gt;4)-Mur2Ac(oyl-L-Ala-gamma-D-Glu-L-Lys-D-Ala-D-Ala)](n+1)-di-trans,octa-cis-undecaprenyl diphosphate + di-trans,octa-cis-undecaprenyl diphosphate + H(+). It functions in the pathway cell wall biogenesis; peptidoglycan biosynthesis. Its function is as follows. Peptidoglycan polymerase that catalyzes glycan chain elongation from lipid-linked precursors. The chain is Biosynthetic peptidoglycan transglycosylase from Pseudomonas putida (strain ATCC 700007 / DSM 6899 / JCM 31910 / BCRC 17059 / LMG 24140 / F1).